We begin with the raw amino-acid sequence, 91 residues long: Thioredoxin (91 aa).

The Thioredoxin domain occupies 2–91 (SDSIVHVTDD…SRQSEVEATK (90 aa)). The cysteines at positions 33 and 36 are disulfide-linked.

This sequence belongs to the thioredoxin family.

Its function is as follows. Participates in various redox reactions through the reversible oxidation of its active center dithiol to a disulfide and catalyzes dithiol-disulfide exchange reactions. The sequence is that of Thioredoxin (trxA) from Thiocapsa roseopersicina.